Consider the following 286-residue polypeptide: Beta-lactamase SHV-2 (286 aa).

The signal sequence occupies residues Met-1–Ala-21. The active-site Acyl-ester intermediate is the Ser-66. The cysteines at positions 73 and 119 are disulfide-linked. Glu-164 serves as the catalytic Proton acceptor. Position 230–232 (Lys-230–Gly-232) interacts with substrate.

Belongs to the class-A beta-lactamase family.

It carries out the reaction a beta-lactam + H2O = a substituted beta-amino acid. This enzyme hydrolyzes cefotaxime, ceftazidime and other broad spectrum cephalosporins. The chain is Beta-lactamase SHV-2 (bla) from Klebsiella pneumoniae.